Consider the following 965-residue polypeptide: Collagen alpha-1(I) chain (965 aa).

The interval 1–965 (GGISVPGPMG…PGPPGPPGPP (965 aa)) is disordered. A 4-hydroxyproline mark is found at Pro18, Pro21, Pro23, Pro32, Pro35, Pro38, Pro53, Pro68, Pro74, Pro83, and Pro89. The span at 26-44 (QGFQGPPGEPGEPGSSGPM) shows a compositional bias: low complexity. The segment covering 56–70 (NGDDGEAGKPGRPGE) has biased composition (basic and acidic residues). At Lys92 the chain carries 5-hydroxylysine; alternate. Lys92 carries an O-linked (Gal...) hydroxylysine; alternate glycan. Ser98 is modified (phosphoserine). Over residues 106–122 (DAGPAGPKGEPGSPGEN) the composition is skewed to low complexity. A 4-hydroxyproline mark is found at Pro116, Pro119, Pro125, Pro139, Pro160, Pro169, Pro172, Pro199, Pro202, Pro214, Pro220, Pro229, Pro235, Pro238, and Pro253. Low complexity predominate over residues 139–157 (PGASGPAGARGNDGATGAA). Residues 159–171 (PPGPTGPAGPPGF) show a composition bias toward pro residues. Residues 205–244 (AGAAGPAGNPGADGQPGAKGANGAPGIAGAPGFPGARGPS) are compositionally biased toward low complexity. A 5-hydroxylysine modification is found at Lys256. A 4-hydroxyproline mark is found at Pro262, Pro265, Pro269, Pro278, Pro293, Pro299, Pro308, and Pro314. Positions 303–312 (GERGGPGSRG) are enriched in gly residues. Residue Lys323 is modified to 5-hydroxylysine. 4-hydroxyproline occurs at positions 326, 332, 338, 347, 350, 359, 368, 374, 386, 395, 404, 407, 425, 442, 448, 454, 460, 466, 472, 484, 493, 506, 512, and 521. Positions 341 to 367 (KGLTGSPGSPGPDGKTGPPGPAGQDGR) are enriched in low complexity. The span at 376–395 (ARGQAGVMGFPGPKGAAGEP) shows a compositional bias: low complexity. Residues 454 to 463 (PGEAGKPGEQ) show a composition bias toward low complexity. Residue Lys533 is modified to 5-hydroxylysine. Pro539, Pro554, and Pro560 each carry 4-hydroxyproline. The span at 566 to 580 (SGPSGPAGPTGARGA) shows a compositional bias: low complexity. Ser569 is subject to Phosphoserine. 4-hydroxyproline occurs at positions 581, 587, 590, 599, 605, 623, 632, and 641. Positions 593 to 620 (AGFAGPPGADGQPGAKGEPGDAGAKGDA) are enriched in low complexity. Lys644 carries the post-translational modification 5-hydroxylysine. The span at 649 to 665 (SAGPPGATGFPGAAGRV) shows a compositional bias: low complexity. Pro653 and Pro659 each carry 4-hydroxyproline. Pro667 bears the 3-hydroxyproline mark. 4-hydroxyproline is present on residues Pro668, Pro677, Pro680, Pro716, Pro725, Pro743, Pro752, Pro755, Pro761, Pro776, Pro782, Pro788, Pro796, and Pro802. Residues 710 to 725 (SGEKGSPGADGPAGAP) are compositionally biased toward low complexity. Over residues 775–785 (PPGPMGPPGLA) the composition is skewed to pro residues. Lys811 carries the 5-hydroxylysine modification. Pro819, Pro822, and Pro825 each carry 4-hydroxyproline. The segment covering 819 to 831 (PGAPGAPGAPGPV) has biased composition (pro residues). Residues 851 to 865 (AGPAGARGPAGPQGP) show a composition bias toward low complexity. The span at 866-880 (RGDKGETGEQGDRGI) shows a compositional bias: basic and acidic residues. Lys869 is modified (5-hydroxylysine). Lys881 bears the 5-hydroxylysine; alternate mark. O-linked (Gal...) hydroxylysine; alternate glycosylation is present at Lys881. Residues Pro896, Pro899, Pro917, and Pro932 each carry the 4-hydroxyproline modification. Residues 899-932 (PGEQGPSGASGPAGPRGPPGSAGSPGKDGLNGLP) show a composition bias toward low complexity. The residue at position 937 (Pro937) is a 3-hydroxyproline. A 4-hydroxyproline modification is found at Pro938. A compositionally biased stretch (pro residues) spans 950–965 (VGPPGPPGPPGPPGPP). A 3-hydroxyproline modification is found at Pro952. Residue Pro953 is modified to 4-hydroxyproline. Pro955 is modified (3-hydroxyproline). A 4-hydroxyproline modification is found at Pro956. Residue Pro958 is modified to 3-hydroxyproline. Pro959, Pro962, and Pro965 each carry 4-hydroxyproline.

It belongs to the fibrillar collagen family. Trimers of one alpha 2(I) and two alpha 1(I) chains. In terms of processing, contains mostly 4-hydroxyproline. Proline residues at the third position of the tripeptide repeating unit (G-X-Y) are hydroxylated in some or all of the chains. Post-translationally, contains 3-hydroxyproline at a few sites. This modification occurs on the first proline residue in the sequence motif Gly-Pro-Hyp, where Hyp is 4-hydroxyproline. Lysine residues at the third position of the tripeptide repeating unit (G-X-Y) are 5-hydroxylated in some or all of the chains. In terms of processing, O-glycosylated on hydroxylated lysine residues. The O-linked glycan consists of a Glc-Gal disaccharide. In terms of tissue distribution, expressed in bones.

It localises to the secreted. Its subcellular location is the extracellular space. The protein resides in the extracellular matrix. Functionally, type I collagen is a member of group I collagen (fibrillar forming collagen). The chain is Collagen alpha-1(I) chain from Acratocnus sp. (strain SLP-2019) (Ground sloth).